A 274-amino-acid chain; its full sequence is Large ribosomal subunit protein uL2 (274 aa).

Residues 224-259 (AMNPVDHPHGGGEGRTSGGRHPVTPWGIPTKGYKTR) are disordered.

It belongs to the universal ribosomal protein uL2 family. As to quaternary structure, part of the 50S ribosomal subunit. Forms a bridge to the 30S subunit in the 70S ribosome.

One of the primary rRNA binding proteins. Required for association of the 30S and 50S subunits to form the 70S ribosome, for tRNA binding and peptide bond formation. It has been suggested to have peptidyltransferase activity; this is somewhat controversial. Makes several contacts with the 16S rRNA in the 70S ribosome. The polypeptide is Large ribosomal subunit protein uL2 (Citrifermentans bemidjiense (strain ATCC BAA-1014 / DSM 16622 / JCM 12645 / Bem) (Geobacter bemidjiensis)).